The sequence spans 141 residues: ATP synthase epsilon chain (141 aa).

This sequence belongs to the ATPase epsilon chain family. F-type ATPases have 2 components, CF(1) - the catalytic core - and CF(0) - the membrane proton channel. CF(1) has five subunits: alpha(3), beta(3), gamma(1), delta(1), epsilon(1). CF(0) has three main subunits: a, b and c.

Its subcellular location is the cell membrane. Produces ATP from ADP in the presence of a proton gradient across the membrane. This chain is ATP synthase epsilon chain, found in Lactococcus lactis subsp. cremoris (strain SK11).